The chain runs to 436 residues: Glutamyl-tRNA reductase (436 aa).

Substrate-binding positions include 49–52 (TCNR), S109, 114–116 (EGQ), and Q120. Residue C50 is the Nucleophile of the active site. 198 to 203 (GAGRMS) contacts NADP(+).

It belongs to the glutamyl-tRNA reductase family. As to quaternary structure, homodimer.

The catalysed reaction is (S)-4-amino-5-oxopentanoate + tRNA(Glu) + NADP(+) = L-glutamyl-tRNA(Glu) + NADPH + H(+). The protein operates within porphyrin-containing compound metabolism; protoporphyrin-IX biosynthesis; 5-aminolevulinate from L-glutamyl-tRNA(Glu): step 1/2. It functions in the pathway porphyrin-containing compound metabolism; chlorophyll biosynthesis. Its function is as follows. Catalyzes the NADPH-dependent reduction of glutamyl-tRNA(Glu) to glutamate 1-semialdehyde (GSA). This is Glutamyl-tRNA reductase from Prochlorococcus marinus (strain AS9601).